Here is a 102-residue protein sequence, read N- to C-terminus: Small ribosomal subunit protein uS10 (102 aa).

This sequence belongs to the universal ribosomal protein uS10 family. Part of the 30S ribosomal subunit.

Functionally, involved in the binding of tRNA to the ribosomes. The protein is Small ribosomal subunit protein uS10 of Thermotoga neapolitana (strain ATCC 49049 / DSM 4359 / NBRC 107923 / NS-E).